A 250-amino-acid polypeptide reads, in one-letter code: uncharacterized protein (250 aa).

6 residues coordinate NAD(+): serine 15, leucine 17, aspartate 36, aspartate 56, valine 57, and cysteine 82. Residue serine 143 participates in substrate binding. Residues tyrosine 156, lysine 160, phenylalanine 189, and threonine 191 each contribute to the NAD(+) site. The active-site Proton acceptor is tyrosine 156.

This sequence belongs to the short-chain dehydrogenases/reductases (SDR) family.

This is an uncharacterized protein from Mycobacterium tuberculosis (strain CDC 1551 / Oshkosh).